A 718-amino-acid polypeptide reads, in one-letter code: Heat shock 70 kDa protein 6, chloroplastic (718 aa).

The N-terminal 92 residues, 1-92, are a transit peptide targeting the chloroplast; the sequence is MASSAAQIHV…IDLGTTNSAV (92 aa). The segment at 671 to 718 is disordered; sequence QSLYNQPGAGGPGAGPSPGGEGASSGDSSSSKGGDGDDVIDADFTDSQ. Residues 678-693 are compositionally biased toward gly residues; that stretch reads GAGGPGAGPSPGGEGA. The segment covering 706–718 has biased composition (acidic residues); it reads GDDVIDADFTDSQ.

This sequence belongs to the heat shock protein 70 (TC 1.A.33) family. DnaK subfamily. Interacts with geminivirus movement protein (MP).

The protein localises to the plastid. It localises to the chloroplast stroma. Acts redundantly with HSP70-7 in the thermotolerance of germinating seeds. Plays an important role in the protein precursor import into chloroplasts. Functionally, in cooperation with other chaperones, Hsp70s are key components that facilitate folding of de novo synthesized proteins, assist translocation of precursor proteins into organelles, and are responsible for degradation of damaged protein under stress conditions. This is Heat shock 70 kDa protein 6, chloroplastic (HSP70-6) from Arabidopsis thaliana (Mouse-ear cress).